The chain runs to 318 residues: DNA primase small subunit PriS (318 aa).

Residues D95, D97, and D224 contribute to the active site.

It belongs to the eukaryotic-type primase small subunit family. As to quaternary structure, heterodimer of a small subunit (PriS) and a large subunit (PriL). The cofactor is Mg(2+). Requires Mn(2+) as cofactor.

Catalytic subunit of DNA primase, an RNA polymerase that catalyzes the synthesis of short RNA molecules used as primers for DNA polymerase during DNA replication. The small subunit contains the primase catalytic core and has DNA synthesis activity on its own. Binding to the large subunit stabilizes and modulates the activity, increasing the rate of DNA synthesis while decreasing the length of the DNA fragments, and conferring RNA synthesis capability. The DNA polymerase activity may enable DNA primase to also catalyze primer extension after primer synthesis. May also play a role in DNA repair. The chain is DNA primase small subunit PriS from Sulfurisphaera tokodaii (strain DSM 16993 / JCM 10545 / NBRC 100140 / 7) (Sulfolobus tokodaii).